The chain runs to 145 residues: D-aminoacyl-tRNA deacylase (145 aa).

Residues Gly-137 to Pro-138 carry the Gly-cisPro motif, important for rejection of L-amino acids motif.

The protein belongs to the DTD family. As to quaternary structure, homodimer.

It is found in the cytoplasm. The catalysed reaction is glycyl-tRNA(Ala) + H2O = tRNA(Ala) + glycine + H(+). It catalyses the reaction a D-aminoacyl-tRNA + H2O = a tRNA + a D-alpha-amino acid + H(+). An aminoacyl-tRNA editing enzyme that deacylates mischarged D-aminoacyl-tRNAs. Also deacylates mischarged glycyl-tRNA(Ala), protecting cells against glycine mischarging by AlaRS. Acts via tRNA-based rather than protein-based catalysis; rejects L-amino acids rather than detecting D-amino acids in the active site. By recycling D-aminoacyl-tRNA to D-amino acids and free tRNA molecules, this enzyme counteracts the toxicity associated with the formation of D-aminoacyl-tRNA entities in vivo and helps enforce protein L-homochirality. The chain is D-aminoacyl-tRNA deacylase from Shewanella halifaxensis (strain HAW-EB4).